The sequence spans 94 residues: DNA-directed RNA polymerase subunit Rpo11 (94 aa).

It belongs to the archaeal Rpo11/eukaryotic RPB11/RPC19 RNA polymerase subunit family. Part of the RNA polymerase complex.

Its subcellular location is the cytoplasm. It carries out the reaction RNA(n) + a ribonucleoside 5'-triphosphate = RNA(n+1) + diphosphate. Its function is as follows. DNA-dependent RNA polymerase (RNAP) catalyzes the transcription of DNA into RNA using the four ribonucleoside triphosphates as substrates. The protein is DNA-directed RNA polymerase subunit Rpo11 of Natronomonas pharaonis (strain ATCC 35678 / DSM 2160 / CIP 103997 / JCM 8858 / NBRC 14720 / NCIMB 2260 / Gabara) (Halobacterium pharaonis).